A 326-amino-acid polypeptide reads, in one-letter code: tRNA(Ile)-lysidine synthase (326 aa).

23–28 contributes to the ATP binding site; sequence SGGVDS.

It belongs to the tRNA(Ile)-lysidine synthase family.

Its subcellular location is the cytoplasm. It catalyses the reaction cytidine(34) in tRNA(Ile2) + L-lysine + ATP = lysidine(34) in tRNA(Ile2) + AMP + diphosphate + H(+). Ligates lysine onto the cytidine present at position 34 of the AUA codon-specific tRNA(Ile) that contains the anticodon CAU, in an ATP-dependent manner. Cytidine is converted to lysidine, thus changing the amino acid specificity of the tRNA from methionine to isoleucine. This Wolinella succinogenes (strain ATCC 29543 / DSM 1740 / CCUG 13145 / JCM 31913 / LMG 7466 / NCTC 11488 / FDC 602W) (Vibrio succinogenes) protein is tRNA(Ile)-lysidine synthase.